The chain runs to 164 residues: SsrA-binding protein (164 aa).

Belongs to the SmpB family.

The protein resides in the cytoplasm. Its function is as follows. Required for rescue of stalled ribosomes mediated by trans-translation. Binds to transfer-messenger RNA (tmRNA), required for stable association of tmRNA with ribosomes. tmRNA and SmpB together mimic tRNA shape, replacing the anticodon stem-loop with SmpB. tmRNA is encoded by the ssrA gene; the 2 termini fold to resemble tRNA(Ala) and it encodes a 'tag peptide', a short internal open reading frame. During trans-translation Ala-aminoacylated tmRNA acts like a tRNA, entering the A-site of stalled ribosomes, displacing the stalled mRNA. The ribosome then switches to translate the ORF on the tmRNA; the nascent peptide is terminated with the 'tag peptide' encoded by the tmRNA and targeted for degradation. The ribosome is freed to recommence translation, which seems to be the essential function of trans-translation. In Synechococcus sp. (strain CC9311), this protein is SsrA-binding protein.